Here is a 396-residue protein sequence, read N- to C-terminus: L-lactate dehydrogenase (396 aa).

An FMN hydroxy acid dehydrogenase domain is found at 1 to 380 (MIISAASDYR…SRDSLVQELG (380 aa)). Y24 is a binding site for substrate. FMN-binding residues include S106 and Q127. A substrate-binding site is contributed by Y129. Residue T155 coordinates FMN. R164 contacts substrate. K251 contributes to the FMN binding site. Catalysis depends on H275, which acts as the Proton acceptor. R278 contributes to the substrate binding site. 306-330 (DSGIRNGLDVVRMIALGADSVLLGR) contacts FMN.

It belongs to the FMN-dependent alpha-hydroxy acid dehydrogenase family. Requires FMN as cofactor.

Its subcellular location is the cell inner membrane. It catalyses the reaction (S)-lactate + A = pyruvate + AH2. Its function is as follows. Catalyzes the conversion of L-lactate to pyruvate. Is coupled to the respiratory chain. This Citrobacter koseri (strain ATCC BAA-895 / CDC 4225-83 / SGSC4696) protein is L-lactate dehydrogenase.